The sequence spans 390 residues: MVNTSLLAALTAYAVAVSAAPTAPQVKGFSVNQVAVPKGVYRHPAAQLAKAYGKYHATVPTQVAAAAAATGSVTTNPTSNDEEYITQVTVGDDTLGLDFDTGSADLWVFSSQTPSSERSGHDYYTPGSSAQKIDGATWSISYGDGSSASGDVYKDKVTVGGVSYDSQAVESAEKVSSEFTQDTANDGLLGLAFSSINTVQPTPQKTFFDNVKSSLSEPIFAVALKHNAPGVYDFGYTDSSKYTGSITYTDVDNSQGFWGFTADGYSIGSDSSSDSITGIADTGTTLLLLDDSIVDAYYEQVNGASYDSSQGGYVFPSSASLPDFSVTIGDYTATVPGEYISFADVGNGQTFGGIQSNSGIGFSIFGDVFLKSQYVVFDASGPRLGFAAQA.

The first 19 residues, 1–19, serve as a signal peptide directing secretion; sequence MVNTSLLAALTAYAVAVSA. Positions 20–67 are cleaved as a propeptide — activation peptide; that stretch reads APTAPQVKGFSVNQVAVPKGVYRHPAAQLAKAYGKYHATVPTQVAAAA. Threonine 70 carries an O-linked (Man...) threonine glycan. Residues 84 to 387 enclose the Peptidase A1 domain; the sequence is YITQVTVGDD…DASGPRLGFA (304 aa). Catalysis depends on residues aspartate 100 and aspartate 281.

Belongs to the peptidase A1 family.

Its subcellular location is the secreted. It catalyses the reaction Hydrolysis of proteins with broad specificity. Generally favors hydrophobic residues in P1 and P1', but also accepts Lys in P1, which leads to activation of trypsinogen. Does not clot milk.. Inhibited by the microbial peptide pepstatin. Secreted aspartic endopeptidase that allows assimilation of proteinaceous substrates. The scissile peptide bond is attacked by a nucleophilic water molecule activated by two aspartic residues in the active site. Shows a broad primary substrate specificity. Favors hydrophobic residues at the P1 and P1' positions, but also accepts a lysine residue in the P1 position, leading to the activation of trypsinogen and chymotrypsinogen A. In Aspergillus oryzae (Yellow koji mold), this protein is Aspergillopepsin-1 (pepA).